The chain runs to 65 residues: MPAGVSWPRYLRMFAASVLSMFAGAQVVHHYYRPDLSIPEIPPKPGELRTELLGLKERQMDSQKQ.

At 1-9 (MPAGVSWPR) the chain is on the mitochondrial matrix side. A helical; Signal-anchor for type II membrane protein membrane pass occupies residues 10–32 (YLRMFAASVLSMFAGAQVVHHYY). Topologically, residues 33-65 (RPDLSIPEIPPKPGELRTELLGLKERQMDSQKQ) are mitochondrial intermembrane.

It belongs to the UQCC6 family. Highly expressed in skeletal and cardiac muscle (at protein level).

Its subcellular location is the mitochondrion inner membrane. Functionally, required for the assembly and stability of the mitochondrial ubiquinol-cytochrome c reductase complex (complex III (CIII) or cytochrome b-c1 complex), a multisubunit transmembrane complex that is part of the mitochondrial electron transport chain (ETC) which drives oxidative phosphorylation. Mediates early complex III biogenesis. Participates in regulating the levels of electron transport chain proteins, and therefore energy supply, in response to changes in energy demand. Also required for cytochrome c oxidase complex (complex IV) assembly. The polypeptide is Ubiquinol-cytochrome-c reductase complex assembly factor 6 (uqcc6) (Danio rerio (Zebrafish)).